We begin with the raw amino-acid sequence, 76 residues long: UPF0291 protein BPUM_1689 (76 aa).

Disordered regions lie at residues 1–31 (MISKNQLARINELSKKSKETGLSDAEKTEQK) and 56–76 (DPEGNDVTPEKLKRERDQNLH). 2 stretches are compositionally biased toward basic and acidic residues: residues 12–31 (ELSKKSKETGLSDAEKTEQK) and 63–76 (TPEKLKRERDQNLH).

It belongs to the UPF0291 family.

It is found in the cytoplasm. In Bacillus pumilus (strain SAFR-032), this protein is UPF0291 protein BPUM_1689.